Here is a 209-residue protein sequence, read N- to C-terminus: Uridine kinase (209 aa).

12–19 (GGSGSGKT) is a binding site for ATP.

The protein belongs to the uridine kinase family.

It localises to the cytoplasm. The enzyme catalyses uridine + ATP = UMP + ADP + H(+). The catalysed reaction is cytidine + ATP = CMP + ADP + H(+). It functions in the pathway pyrimidine metabolism; CTP biosynthesis via salvage pathway; CTP from cytidine: step 1/3. The protein operates within pyrimidine metabolism; UMP biosynthesis via salvage pathway; UMP from uridine: step 1/1. The protein is Uridine kinase of Listeria welshimeri serovar 6b (strain ATCC 35897 / DSM 20650 / CCUG 15529 / CIP 8149 / NCTC 11857 / SLCC 5334 / V8).